The following is a 764-amino-acid chain: Hemocyte protein-glutamine gamma-glutamyltransferase (764 aa).

Residues C343, H402, and D425 contribute to the active site. The Ca(2+) site is built by N465, D467, E522, and E527.

It belongs to the transglutaminase superfamily. Transglutaminase family. Ca(2+) serves as cofactor. In terms of tissue distribution, mainly expressed in hemocytes, hepatopancreas, and gastric tissues. On the other hand nothing was detected in the heart, intestine and muscle.

The protein resides in the membrane. The enzyme catalyses L-glutaminyl-[protein] + L-lysyl-[protein] = [protein]-L-lysyl-N(6)-5-L-glutamyl-[protein] + NH4(+). Its function is as follows. Catalyzes the cross-linking of proteins and the conjugation of polyamines to proteins. In Tachypleus tridentatus (Japanese horseshoe crab), this protein is Hemocyte protein-glutamine gamma-glutamyltransferase.